Consider the following 586-residue polypeptide: Phosphatase and actin regulator 1 (586 aa).

The short motif at 62-83 is the Nuclear localization signal element; it reads RRRSKFATLGRLFKPWKWRKKK. The stretch at 92–117 is one RPEL 1 repeat; the sequence is AALERKISMRQSREELIKRGVLKEMY. The segment at 373–414 is disordered; that stretch reads ECEDDKENVPHETSYDDSSCLYSRDEEEDDDDDDDDEDDDSS. Acidic residues predominate over residues 397-413; that stretch reads DEEEDDDDDDDDEDDDS. RPEL repeat units lie at residues 428–453, 466–491, and 504–529; these read DSLA…PMQT, TKLT…KPRN, and RRLT…ISFS.

This sequence belongs to the phosphatase and actin regulator family. In terms of assembly, interacts (via RPEL repeats) with ACTA1.

Its subcellular location is the cytoplasm. It is found in the synapse. The protein resides in the nucleus. Binds actin monomers (G actin) and plays a role in the reorganization of the actin cytoskeleton and in formation of actin stress fibers. The sequence is that of Phosphatase and actin regulator 1 (phactr1) from Xenopus laevis (African clawed frog).